We begin with the raw amino-acid sequence, 147 residues long: Calcium-regulated heat stable protein 1 (147 aa).

A compositionally biased stretch (pro residues) spans Met1–Pro12. Residues Met1–Arg49 form a disordered region. Ser2 carries the N-acetylserine modification. Phosphoserine occurs at positions 30, 32, and 41. Thr45 carries the phosphothreonine modification. Ser52 and Ser58 each carry phosphoserine. The CSD domain occupies Val62–Thr129. Phosphoserine is present on residues Ser146 and Ser147.

In terms of assembly, homodimer. Interacts with STYX. In terms of processing, can be phosphorylated by DYRK2 (in vitro). Dephosphorylated by calcineurin in a Ca(2+) dependent manner, and probably by PP2A or PP4 serine phosphatases in cAMP- and PKC-mediated pathways. As to expression, widely expressed.

The protein localises to the cytoplasm. It is found in the P-body. Its subcellular location is the cytoplasmic granule. In terms of biological role, binds mRNA and regulates the stability of target mRNA. This chain is Calcium-regulated heat stable protein 1 (Carhsp1), found in Rattus norvegicus (Rat).